The chain runs to 510 residues: Maturase K (510 aa).

The protein belongs to the intron maturase 2 family. MatK subfamily.

It localises to the plastid. It is found in the chloroplast. Its function is as follows. Usually encoded in the trnK tRNA gene intron. Probably assists in splicing its own and other chloroplast group II introns. This is Maturase K from Cestrum elegans (Red cestrum).